The chain runs to 671 residues: DNA ligase (671 aa).

NAD(+)-binding positions include 32 to 36, 81 to 82, and Glu113; these read DAEYD and SL. The N6-AMP-lysine intermediate role is filled by Lys115. 4 residues coordinate NAD(+): Arg136, Glu173, Lys290, and Lys314. Positions 408, 411, 426, and 432 each coordinate Zn(2+). Residues 593–671 enclose the BRCT domain; that stretch reads EIDSPFAGKT…EAEMLRLLGS (79 aa).

The protein belongs to the NAD-dependent DNA ligase family. LigA subfamily. Mg(2+) is required as a cofactor. It depends on Mn(2+) as a cofactor.

It catalyses the reaction NAD(+) + (deoxyribonucleotide)n-3'-hydroxyl + 5'-phospho-(deoxyribonucleotide)m = (deoxyribonucleotide)n+m + AMP + beta-nicotinamide D-nucleotide.. Functionally, DNA ligase that catalyzes the formation of phosphodiester linkages between 5'-phosphoryl and 3'-hydroxyl groups in double-stranded DNA using NAD as a coenzyme and as the energy source for the reaction. It is essential for DNA replication and repair of damaged DNA. In Escherichia coli O9:H4 (strain HS), this protein is DNA ligase.